The following is a 556-amino-acid chain: Probable glucomannan 4-beta-mannosyltransferase 3 (556 aa).

The helical transmembrane segment at 56-76 threads the bilayer; sequence IFVFIPILKCLVTICLVMSLL. Residue Asp-159 is part of the active site. Asp-218 and Asp-220 together coordinate substrate. Residue Asp-312 is part of the active site. 4 helical membrane-spanning segments follow: residues 391 to 411, 428 to 448, 509 to 529, and 530 to 550; these read IVVHIFTFVFYCLILPTTVLF, ITILNAIATPRSLHLLVFWIL, LVVGLYIFFCGCYDFAYGGSY, and FYVYLFLQSCAFFVAGVGYIG.

This sequence belongs to the glycosyltransferase 2 family. Plant cellulose synthase-like A subfamily.

The protein localises to the golgi apparatus membrane. The catalysed reaction is GDP-mannose + (glucomannan)n = GDP + (glucomannan)n+1.. Its function is as follows. Probable mannan synthase which consists of a 4-beta-mannosyltransferase activity on mannan using GDP-mannose. The beta-1,4-mannan product is the backbone for galactomannan synthesis by galactomannan galactosyltransferase. Galactomannan is a noncellulosic polysaccharides of plant cell wall. The polypeptide is Probable glucomannan 4-beta-mannosyltransferase 3 (Arabidopsis thaliana (Mouse-ear cress)).